The sequence spans 169 residues: Protein-export protein SecB (169 aa).

The protein belongs to the SecB family. As to quaternary structure, homotetramer, a dimer of dimers. One homotetramer interacts with 1 SecA dimer.

It is found in the cytoplasm. In terms of biological role, one of the proteins required for the normal export of preproteins out of the cell cytoplasm. It is a molecular chaperone that binds to a subset of precursor proteins, maintaining them in a translocation-competent state. It also specifically binds to its receptor SecA. The polypeptide is Protein-export protein SecB (Pseudoalteromonas atlantica (strain T6c / ATCC BAA-1087)).